The chain runs to 244 residues: Protein-lysine methyltransferase METTL21E (244 aa).

Residues M1–D20 are disordered. Over residues T9–R18 the composition is skewed to basic and acidic residues. S-adenosyl-L-methionine-binding positions include W69, G97–G99, D118, W149, and A170.

This sequence belongs to the methyltransferase superfamily. METTL21 family.

Its function is as follows. Protein-lysine methyltransferase. The protein is Protein-lysine methyltransferase METTL21E (Mettl21e) of Mus musculus (Mouse).